A 23-amino-acid chain; its full sequence is Laccase-1 (23 aa).

This sequence belongs to the multicopper oxidase family. Requires Cu cation as cofactor.

Its subcellular location is the secreted. It carries out the reaction 4 hydroquinone + O2 = 4 benzosemiquinone + 2 H2O. With respect to regulation, strongly inhibited by sodium azide, sodium cyanide, Li(+), Sn(+), Hg(2+), and the disulfide-reducing agents beta-mercaptoethanol, dithiothreitol and thioglycolic acid. Moderately inhibited by Mn(2+) and Fe(2+), inhibition by these metal ions is stronger at 0.1 mM than at 1 mM. Moderately inhibited by Cu(2+). Functionally, lignin degradation and detoxification of lignin-derived products. Demethylates eucalyptus hard wood lignin. Has high activity against the non-phenolic heterocyclic compound ABTS, and lower activity against the phenolic substrates syringic acid, caffeic acid, syringaldazine, vanillic acid, catechol and levodihydroxyphenylalanine. The polypeptide is Laccase-1 (Galerina sp).